Consider the following 523-residue polypeptide: Pentatricopeptide repeat-containing protein At1g64580 (523 aa).

13 PPR repeats span residues 43-77, 78-112, 113-147, 148-182, 183-217, 218-252, 253-287, 288-322, 323-357, 358-392, 393-427, 428-462, and 463-497; these read HHHHYRERLRNELHCIKFDDAFSLFCEMLQSRPIP, SIVDFTRVLTVIAKMNKFDIVIYLYHKMENLGISH, DLYSFTILIHCFCRCSRLSLALALLGKMMKLGFRP, SIVTLGSLLNGFCQGNRFQEAVSLVDSMDGFGFVP, NVVIYNTVINGLCKNRDLNNALEVFYCMEKKGIRA, DAVTYNTLISGLSNSGRWTDAARLLRDMVKRKIDP, NVIFFTALIDTFVKEGNLLEARNLYKEMIRRSVVP, NVFTYNSLINGFCIHGCLGDAKYMFDLMVSKGCFP, DVVTYNTLITGFCKSKRVEDGMKLFCEMTYQGLVG, DAFTYNTLIHGYCQAGKLNVAQKVFNRMVDCGVSP, DIVTYNILLDCLCNNGKIEKALVMVEDLQKSEMDV, DIITYNIIIQGLCRTDKLKEAWCLFRSLTRKGVKP, and DAIAYITMISGLCRKGLQREADKLCRRMKEDGFMP.

The protein belongs to the PPR family. P subfamily.

This chain is Pentatricopeptide repeat-containing protein At1g64580, found in Arabidopsis thaliana (Mouse-ear cress).